We begin with the raw amino-acid sequence, 757 residues long: MDVNPTLIFLKVPAQNAISTTFPYTGDPPYSHGTGTGYTMDTVNRTHQYSEKGKWTTNTETGAPQLNPIDGPLPEDNEPSGYAQTDCVLEAMAFLEESHPGIFENSCLETMEAVQQTRVDKLTQGRQTYDWTLNRNQPAATALANTIEVFRSNGLTANESGRLIDFLKDVMESMDKEEMEITTHFQRKRRVRDNMTKKMVTQRTIGKKKQRLNKRSYLIRALTLNTMTKDAERGKLRRRAIATPGMQIRGFVYFVETLARSICEKLEQSGLPVGGNEKKAKLANVVRKMMTNSQDTELSFTITGDNTKWNENQNPRMFLAMITYITRNQPEWFRNVLSIAPLMFSNKMARLGKGYMFESKSMKLRTQIPAEMLASIDLKYFNDSTRKKIEKIRPLLIDGTASLSPGMMMGMFNMLSTVLGVSILNLGQKRYTKTTYWWDGLQSSDDFALIVNAPNHEGIQAGVDRFYRTCKLVGINMSKKKSYINRTGTFEFTSFFYRYGFVANFSMELPSFGVSGINESADMSIGVTVIKNNMINNDLGPATAQMALQLFIKDYRYTYRCHRGDTQIQTRRSFELKKLWEQTRSKAGLLVSDGGPNLYNIRNLHIPEVCLKWELMDEDYQGRLCNPLNPFVSHKEIESVNNAVVMPAHGPAKSMEYDAVATTHSWIPKRNRSILNTSQRGILEDEQMYQKCCNLFEKFFPSSSYRRPVGISSMVEAMVSRARIDARIDFESGRIKKEEFAEIMKICSTIEELKRQK.

2 short sequence motifs (nuclear localization signal) span residues 187–195 and 203–216; these read RKRRVRDNM and RTIG…NKRS. The segment at 249–256 is promoter-binding site; the sequence is RGFVYFVE. One can recognise a RdRp catalytic domain in the interval 286 to 483; sequence VRKMMTNSQD…GINMSKKKSY (198 aa).

Belongs to the influenza viruses polymerase PB1 family. Influenza RNA polymerase is composed of three subunits: PB1, PB2 and PA. Interacts (via N-terminus) with PA (via C-terminus). Interacts (via C-terminus) with PB2 (via N-terminus); this interaction is essential for transcription initiation. Phosphorylated by host PRKCA.

The protein resides in the host nucleus. The protein localises to the host cytoplasm. The enzyme catalyses RNA(n) + a ribonucleoside 5'-triphosphate = RNA(n+1) + diphosphate. In terms of biological role, RNA-dependent RNA polymerase which is responsible for replication and transcription of virus RNA segments. The transcription of viral mRNAs occurs by a unique mechanism called cap-snatching. 5' methylated caps of cellular mRNAs are cleaved after 10-13 nucleotides by PA. In turn, these short capped RNAs are used as primers by PB1 for transcription of viral mRNAs. During virus replication, PB1 initiates RNA synthesis and copy vRNA into complementary RNA (cRNA) which in turn serves as a template for the production of more vRNAs. This Aves protein is RNA-directed RNA polymerase catalytic subunit.